Reading from the N-terminus, the 213-residue chain is Probable GTP-binding protein EngB (213 aa).

The EngB-type G domain maps to 30–204 (EGFEVAFAGR…YTALAGWMEL (175 aa)). Residues 38-45 (GRSNAGKS), 64-68 (GRTQL), 82-85 (DLPG), 149-152 (TKAD), and 182-185 (LFSA) contribute to the GTP site. Positions 45 and 66 each coordinate Mg(2+).

This sequence belongs to the TRAFAC class TrmE-Era-EngA-EngB-Septin-like GTPase superfamily. EngB GTPase family. Requires Mg(2+) as cofactor.

Necessary for normal cell division and for the maintenance of normal septation. In Pseudomonas fluorescens (strain SBW25), this protein is Probable GTP-binding protein EngB.